Reading from the N-terminus, the 134-residue chain is MAAYTSKIFALFALIALSASATTAITTMQYFPPTLAMGTMDPCRQYMMQTLGMGSSTAMFMSQPMALLQQQCCMQLQGMMPQCHCGTSCQMMQSMQQVICAGLGQQQMMKMAMQMPYMCNMAPVNFQLSSCGCC.

The first 24 residues, methionine 1–alanine 24, serve as a signal peptide directing secretion. The segment at glutamine 69–leucine 76 is octapeptide unique to cereal prolamins.

Belongs to the prolamin family.

It is found in the vacuole. Its subcellular location is the aleurone grain. Its function is as follows. Seed storage protein; serves as a source of nitrogen, carbon and sulfur for the young developing seedling. The polypeptide is 10 kDa prolamin (Oryza sativa subsp. indica (Rice)).